The chain runs to 353 residues: UPF0283 membrane protein YcjF (353 aa).

3 helical membrane-spanning segments follow: residues Met70 to Thr90, Val100 to Val120, and Glu213 to Trp233.

The protein belongs to the UPF0283 family.

Its subcellular location is the cell inner membrane. The protein is UPF0283 membrane protein YcjF of Escherichia fergusonii (strain ATCC 35469 / DSM 13698 / CCUG 18766 / IAM 14443 / JCM 21226 / LMG 7866 / NBRC 102419 / NCTC 12128 / CDC 0568-73).